Consider the following 84-residue polypeptide: MFSARLVLVFAVVLCIQLCNASWLDERAMTQEKRCNGKYQKCTSNSQCCDQKDYAKRKLRCLTQCDEGGCMKYKQCMFYAGTQK.

The N-terminal stretch at 1–21 (MFSARLVLVFAVVLCIQLCNA) is a signal peptide. Positions 22 to 34 (SWLDERAMTQEKR) are excised as a propeptide.

This sequence belongs to the sea anemone type 5 potassium channel toxin family. Post-translationally, contains 4 disulfide bonds. In unfertilized eggs and early post-fertilization stages, is expressed uniformly. In gastrulae, the expression becomes spatially-localized and seems to be absent from the oral and aboral poles. In planulae, the expression is clearly observed in the ectoderm in packed gland cells absent from the two body poles, and upon metamorphosis, the expression diminishes. There is two types of gland cells, one large and elongated and another small and round. This toxin is maternally deposited at both protein and RNA levels.

Its subcellular location is the secreted. The protein localises to the nematocyst. Its function is as follows. Neurotoxin that is probably only defensive. Acts as a voltage-gated potassium channel (Kv) inhibitor. In vivo, induces a rapid increase in swimming speed on zebrafish larvae, as well as death which occurs between 2 and 18 hours later. The sequence is that of Toxin NvePTx1 from Nematostella vectensis (Starlet sea anemone).